The primary structure comprises 350 residues: Legumin K (350 aa).

2 disordered regions span residues 37 to 86 and 102 to 170; these read LGGN…GNSV and EEDT…RKNG. 3 stretches are compositionally biased toward basic and acidic residues: residues 104 to 118, 141 to 150, and 160 to 170; these read DTAK…ERSQ, EQSHSHSHRE, and EKQRSEERKNG. In terms of domain architecture, Cupin type-1 spans 182–329; that stretch reads ENIADAAGAD…AFGLRQRQVT (148 aa).

The protein belongs to the 11S seed storage protein (globulins) family. As to quaternary structure, hexamer; each subunit is composed of an acidic and a basic chain derived from a single precursor and linked by a disulfide bond.

This protein found in the seeds of many leguminous and non-leguminous plants is the source of sulfur-containing amino acids in seed meals. The polypeptide is Legumin K (LEGK) (Pisum sativum (Garden pea)).